The sequence spans 56 residues: Large ribosomal subunit protein bL33 (56 aa).

This sequence belongs to the bacterial ribosomal protein bL33 family.

In Rickettsia africae (strain ESF-5), this protein is Large ribosomal subunit protein bL33.